Here is a 170-residue protein sequence, read N- to C-terminus: Cytochrome c-type biogenesis protein CcmE (170 aa).

Residues M1 to R7 lie on the Cytoplasmic side of the membrane. Residues L8–A28 traverse the membrane as a helical; Signal-anchor for type II membrane protein segment. Topologically, residues M29–R170 are periplasmic. Heme is bound by residues H122 and Y126. The interval A132–R170 is disordered.

The protein belongs to the CcmE/CycJ family.

It localises to the cell inner membrane. Its function is as follows. Heme chaperone required for the biogenesis of c-type cytochromes. Transiently binds heme delivered by CcmC and transfers the heme to apo-cytochromes in a process facilitated by CcmF and CcmH. The chain is Cytochrome c-type biogenesis protein CcmE from Methylobacterium radiotolerans (strain ATCC 27329 / DSM 1819 / JCM 2831 / NBRC 15690 / NCIMB 10815 / 0-1).